The chain runs to 166 residues: Large ribosomal subunit protein uL10 (166 aa).

This sequence belongs to the universal ribosomal protein uL10 family. As to quaternary structure, part of the ribosomal stalk of the 50S ribosomal subunit. The N-terminus interacts with L11 and the large rRNA to form the base of the stalk. The C-terminus forms an elongated spine to which L12 dimers bind in a sequential fashion forming a multimeric L10(L12)X complex.

Its function is as follows. Forms part of the ribosomal stalk, playing a central role in the interaction of the ribosome with GTP-bound translation factors. The polypeptide is Large ribosomal subunit protein uL10 (Pseudomonas fluorescens (strain Pf0-1)).